A 280-amino-acid chain; its full sequence is Ribosomal RNA small subunit methyltransferase A (280 aa).

S-adenosyl-L-methionine is bound by residues asparagine 18, leucine 20, glycine 45, glutamate 66, aspartate 89, and asparagine 110.

It belongs to the class I-like SAM-binding methyltransferase superfamily. rRNA adenine N(6)-methyltransferase family. RsmA subfamily.

It is found in the cytoplasm. The enzyme catalyses adenosine(1518)/adenosine(1519) in 16S rRNA + 4 S-adenosyl-L-methionine = N(6)-dimethyladenosine(1518)/N(6)-dimethyladenosine(1519) in 16S rRNA + 4 S-adenosyl-L-homocysteine + 4 H(+). In terms of biological role, specifically dimethylates two adjacent adenosines (A1518 and A1519) in the loop of a conserved hairpin near the 3'-end of 16S rRNA in the 30S particle. May play a critical role in biogenesis of 30S subunits. This chain is Ribosomal RNA small subunit methyltransferase A, found in Cupriavidus necator (strain ATCC 17699 / DSM 428 / KCTC 22496 / NCIMB 10442 / H16 / Stanier 337) (Ralstonia eutropha).